A 297-amino-acid chain; its full sequence is N-acetylmuramic acid 6-phosphate etherase (297 aa).

Residues 55–218 enclose the SIS domain; that stretch reads AAAALKSGGR…STGAMVKFGK (164 aa). Glu-83 serves as the catalytic Proton donor. The active site involves Glu-114.

Belongs to the GCKR-like family. MurNAc-6-P etherase subfamily. As to quaternary structure, homodimer.

It catalyses the reaction N-acetyl-D-muramate 6-phosphate + H2O = N-acetyl-D-glucosamine 6-phosphate + (R)-lactate. The protein operates within amino-sugar metabolism; 1,6-anhydro-N-acetylmuramate degradation. It functions in the pathway amino-sugar metabolism; N-acetylmuramate degradation. It participates in cell wall biogenesis; peptidoglycan recycling. In terms of biological role, specifically catalyzes the cleavage of the D-lactyl ether substituent of MurNAc 6-phosphate, producing GlcNAc 6-phosphate and D-lactate. Together with AnmK, is also required for the utilization of anhydro-N-acetylmuramic acid (anhMurNAc) either imported from the medium or derived from its own cell wall murein, and thus plays a role in cell wall recycling. The sequence is that of N-acetylmuramic acid 6-phosphate etherase from Salmonella typhi.